Consider the following 364-residue polypeptide: Peptide chain release factor 2 (364 aa).

Gln-252 carries the post-translational modification N5-methylglutamine.

Belongs to the prokaryotic/mitochondrial release factor family. Methylated by PrmC. Methylation increases the termination efficiency of RF2.

The protein localises to the cytoplasm. Functionally, peptide chain release factor 2 directs the termination of translation in response to the peptide chain termination codons UGA and UAA. This Clostridium perfringens (strain SM101 / Type A) protein is Peptide chain release factor 2.